The following is a 171-amino-acid chain: Adenine phosphoribosyltransferase (171 aa).

This sequence belongs to the purine/pyrimidine phosphoribosyltransferase family. As to quaternary structure, homodimer.

Its subcellular location is the cytoplasm. It carries out the reaction AMP + diphosphate = 5-phospho-alpha-D-ribose 1-diphosphate + adenine. The protein operates within purine metabolism; AMP biosynthesis via salvage pathway; AMP from adenine: step 1/1. Its function is as follows. Catalyzes a salvage reaction resulting in the formation of AMP, that is energically less costly than de novo synthesis. This is Adenine phosphoribosyltransferase from Rhodospirillum rubrum (strain ATCC 11170 / ATH 1.1.1 / DSM 467 / LMG 4362 / NCIMB 8255 / S1).